We begin with the raw amino-acid sequence, 304 residues long: MDLLTLWNLEREEVLKIIENAEYFKKNRYGHDILKNKSIALIFESPSTRTRMSFDLAVHELGGHSLMMNEGEIHLGKKESIADTARVMSRFVDAIVARVKSHKTLEDLAEYGSVPVINALCDLAHPCQILADLLTMKENGKNFKGLKLAYFGDGNNVSNSLMIAGAILGMDVVIATPRSYEPSGLFVKKALEIIAKYGEGSLTLTDDPEIAAKDADVLYTDVWISMSDKNKNLDEILKIFPKFQINAELLSKAKEDAIVLHCLPANRGLEITDEVIDGKQSKVFDQAENRLHAQKAVLKYIFEH.

Carbamoyl phosphate is bound by residues 47-50 (STRT), R98, and 125-128 (HPCQ). Residues N156, D221, and 225 to 226 (SM) each bind L-ornithine. Residues 262 to 263 (CL) and R290 contribute to the carbamoyl phosphate site.

It belongs to the aspartate/ornithine carbamoyltransferase superfamily. OTCase family.

It is found in the cytoplasm. It carries out the reaction carbamoyl phosphate + L-ornithine = L-citrulline + phosphate + H(+). Its pathway is amino-acid biosynthesis; L-arginine biosynthesis; L-arginine from L-ornithine and carbamoyl phosphate: step 1/3. Its function is as follows. Reversibly catalyzes the transfer of the carbamoyl group from carbamoyl phosphate (CP) to the N(epsilon) atom of ornithine (ORN) to produce L-citrulline. The sequence is that of Ornithine carbamoyltransferase from Methanococcus maripaludis (strain C7 / ATCC BAA-1331).